The primary structure comprises 146 residues: Holo-[acyl-carrier-protein] synthase (146 aa).

Positions 9 and 63 each coordinate Mg(2+).

Belongs to the P-Pant transferase superfamily. AcpS family. The cofactor is Mg(2+).

It is found in the cytoplasm. The catalysed reaction is apo-[ACP] + CoA = holo-[ACP] + adenosine 3',5'-bisphosphate + H(+). In terms of biological role, transfers the 4'-phosphopantetheine moiety from coenzyme A to a Ser of acyl-carrier-protein. The chain is Holo-[acyl-carrier-protein] synthase from Burkholderia ambifaria (strain MC40-6).